The sequence spans 312 residues: Olfactory receptor-like protein COR4 (312 aa).

Residues 1-26 (MASGNCTTPTTFILSGLTDNPGLQMP) are Extracellular-facing. The N-linked (GlcNAc...) asparagine glycan is linked to Asn-5. The chain crosses the membrane as a helical span at residues 27-49 (LFMVFLAIYTITLLTNLGLIALI). The Cytoplasmic segment spans residues 50-57 (SVDLHLQT). Residues 58 to 79 (PMYIFLQNLSFTDAAYSTVITP) form a helical membrane-spanning segment. Residues 80–100 (KMLATFLEERKTISYIGCILQ) lie on the Extracellular side of the membrane. The cysteines at positions 97 and 179 are disulfide-linked. Residues 101–120 (YFSFVLLTVTESLLLAVMAY) form a helical membrane-spanning segment. Topologically, residues 121-139 (DRYVAICKPLLYPSIMTKA) are cytoplasmic. A helical membrane pass occupies residues 140–164 (VCWRLVKGLYSLAFLNSLVHTSGLL). At 165–205 (KLSFCSSNVVNHFFCDNSPLFQISSSSTTLNELLVFIFGSL) the chain is on the extracellular side. Residues 206 to 226 (FAMSSIITILISYVFIILTVV) traverse the membrane as a helical segment. Over 227 to 239 (RIRSKDGKYKAFS) the chain is Cytoplasmic. A helical membrane pass occupies residues 240 to 260 (TCTSHLMAVSLFHGTVIFMYL). Over 261-271 (RPVKLFSLDTD) the chain is Extracellular. The helical transmembrane segment at 272-292 (KIASLFYTVVIPMLNPLIYSW) threads the bilayer. At 293 to 312 (RNKEVKDALRRVIATNVWIH) the chain is on the cytoplasmic side.

Belongs to the G-protein coupled receptor 1 family.

Its subcellular location is the cell membrane. Functionally, odorant receptor. This is Olfactory receptor-like protein COR4 (COR4) from Gallus gallus (Chicken).